The following is a 321-amino-acid chain: Beta-1,3-N-acetylglucosaminyltransferase manic fringe (321 aa).

Over 1–7 (MQCRLPR) the chain is Cytoplasmic. The chain crosses the membrane as a helical; Signal-anchor for type II membrane protein span at residues 8 to 27 (GLAGALLTLLCMGLLCLRYH). The Lumenal portion of the chain corresponds to 28–321 (LNLSPQRVQG…TPWCPQLGAR (294 aa)). Residue Arg-70 coordinates substrate. The N-linked (GlcNAc...) asparagine glycan is linked to Asn-109. Cystine bridges form between Cys-110/Cys-121 and Cys-139/Cys-202. Asp-143 contacts substrate. Residue Asp-144 coordinates Mn(2+). N-linked (GlcNAc...) asparagine glycosylation is present at Asn-185. Asp-232 is a catalytic residue. Mn(2+) is bound at residue His-256. Cys-306 and Cys-315 are disulfide-bonded.

The protein belongs to the glycosyltransferase 31 family. Requires Mn(2+) as cofactor.

It is found in the golgi apparatus membrane. The catalysed reaction is 3-O-(alpha-L-fucosyl)-L-threonyl-[EGF-like domain protein] + UDP-N-acetyl-alpha-D-glucosamine = 3-O-(N-acetyl-beta-D-glucosaminyl-(1-&gt;3)-alpha-L-fucosyl)-L-threonyl-[EGF-like domain protein] + UDP + H(+). It catalyses the reaction 3-O-(alpha-L-fucosyl)-L-seryl-[EGF-like domain protein] + UDP-N-acetyl-alpha-D-glucosamine = 3-O-(N-acetyl-beta-D-glucosaminyl-(1-&gt;3)-alpha-L-fucosyl)-L-seryl-[EGF-like domain protein] + UDP + H(+). Its function is as follows. Glycosyltransferase that initiates the elongation of O-linked fucose residues attached to EGF-like repeats in the extracellular domain of Notch molecules. Modulates NOTCH1 activity by modifying O-fucose residues at specific EGF-like domains resulting in inhibition of NOTCH1 activation by JAG1 and enhancement of NOTCH1 activation by DLL1 via an increase in its binding to DLL1. The protein is Beta-1,3-N-acetylglucosaminyltransferase manic fringe of Homo sapiens (Human).